The chain runs to 478 residues: ATP synthase subunit beta (478 aa).

Residue G155–T162 coordinates ATP.

Belongs to the ATPase alpha/beta chains family. In terms of assembly, F-type ATPases have 2 components, CF(1) - the catalytic core - and CF(0) - the membrane proton channel. CF(1) has five subunits: alpha(3), beta(3), gamma(1), delta(1), epsilon(1). CF(0) has three main subunits: a(1), b(2) and c(9-12). The alpha and beta chains form an alternating ring which encloses part of the gamma chain. CF(1) is attached to CF(0) by a central stalk formed by the gamma and epsilon chains, while a peripheral stalk is formed by the delta and b chains.

The protein localises to the cell inner membrane. The enzyme catalyses ATP + H2O + 4 H(+)(in) = ADP + phosphate + 5 H(+)(out). Functionally, produces ATP from ADP in the presence of a proton gradient across the membrane. The catalytic sites are hosted primarily by the beta subunits. The sequence is that of ATP synthase subunit beta from Fuscovulum blasticum (Rhodobacter blasticus).